The primary structure comprises 349 residues: tRNA N6-adenosine threonylcarbamoyltransferase (349 aa).

Positions 118 and 122 each coordinate Fe cation. Substrate is bound by residues leucine 141–glycine 145, aspartate 174, glycine 187, and asparagine 280. Residue aspartate 308 participates in Fe cation binding.

This sequence belongs to the KAE1 / TsaD family. Fe(2+) is required as a cofactor.

Its subcellular location is the cytoplasm. It catalyses the reaction L-threonylcarbamoyladenylate + adenosine(37) in tRNA = N(6)-L-threonylcarbamoyladenosine(37) in tRNA + AMP + H(+). Required for the formation of a threonylcarbamoyl group on adenosine at position 37 (t(6)A37) in tRNAs that read codons beginning with adenine. Is involved in the transfer of the threonylcarbamoyl moiety of threonylcarbamoyl-AMP (TC-AMP) to the N6 group of A37, together with TsaE and TsaB. TsaD likely plays a direct catalytic role in this reaction. In Acidovorax sp. (strain JS42), this protein is tRNA N6-adenosine threonylcarbamoyltransferase.